The primary structure comprises 157 residues: Transcriptional repressor NrdR (157 aa).

Positions 1–21 (MRCPYCGSEDSQVKDSRPAED) are disordered. Residues 3 to 34 (CPYCGSEDSQVKDSRPAEDGNAIRRRRICPDC) fold into a zinc finger. The segment covering 11–21 (SQVKDSRPAED) has biased composition (basic and acidic residues). The ATP-cone domain occupies 49-139 (LMIIKKTGRK…VYRDFSHAED (91 aa)).

This sequence belongs to the NrdR family. Zn(2+) serves as cofactor.

In terms of biological role, negatively regulates transcription of bacterial ribonucleotide reductase nrd genes and operons by binding to NrdR-boxes. This chain is Transcriptional repressor NrdR, found in Sinorhizobium medicae (strain WSM419) (Ensifer medicae).